The following is a 392-amino-acid chain: Homoserine O-acetyltransferase (392 aa).

Positions Asn-52 to Glu-356 constitute an AB hydrolase-1 domain. Ser-157 acts as the Nucleophile in catalysis. A substrate-binding site is contributed by Arg-227. Residues Asp-320 and His-350 contribute to the active site. Residue Asp-351 participates in substrate binding. Residues Ser-373 to Arg-392 are disordered.

Belongs to the AB hydrolase superfamily. MetX family. As to quaternary structure, homodimer.

The protein resides in the cytoplasm. The catalysed reaction is L-homoserine + acetyl-CoA = O-acetyl-L-homoserine + CoA. The protein operates within amino-acid biosynthesis; L-methionine biosynthesis via de novo pathway; O-acetyl-L-homoserine from L-homoserine: step 1/1. Functionally, transfers an acetyl group from acetyl-CoA to L-homoserine, forming acetyl-L-homoserine. This Mycobacterium avium (strain 104) protein is Homoserine O-acetyltransferase.